The sequence spans 268 residues: Zinc finger protein SNAI2 (268 aa).

Residues 1–20 (MPRSFLVKKHFNASKKPNYS) are SNAG domain. A disordered region spans residues 80 to 117 (SSSLGRVSPPPPSDTSSKDHSGSESPISDEEERLQSKL). 4 consecutive C2H2-type zinc fingers follow at residues 128–150 (FQCN…KQLH), 159–181 (FSCK…IRTH), 185–207 (CVCK…IRTH), and 213–235 (FSCP…LQTH). The C2H2-type 5; atypical zinc finger occupies 241-264 (YQCKNCSKTFSRMSLLHKHEESGC).

This sequence belongs to the snail C2H2-type zinc-finger protein family. Interacts (via SNAG domain) with LIMD1 (via LIM domains), WTIP (via LIM domains) and AJUBA (via LIM domains). Interacts (via zinc fingers) with KPNA2, KPNB1, and TNPO1. May interact (via zinc fingers) with IPO7. Phosphorylated by GSK3B. Once phosphorylated, it becomes a target for ubiquitination. Post-translationally, ubiquitinated by the SCF(FBXO11) complex; ubiquitination requires previous GSK3B-mediated SNAI2 phosphorylation. Expressed in most adult human tissues, including spleen, thymus, prostate, testis, ovary, small intestine, colon, heart, brain, placenta, lung, liver, skeletal muscle, kidney and pancreas. Not detected in peripheral blood leukocyte. Expressed in the dermis and in all layers of the epidermis, with high levels of expression in the basal layers (at protein level). Expressed in osteoblasts (at protein level). Expressed in mesenchymal stem cells (at protein level). Expressed in breast tumor cells (at protein level).

It is found in the nucleus. Its subcellular location is the cytoplasm. In terms of biological role, transcriptional repressor that modulates both activator-dependent and basal transcription. Involved in the generation and migration of neural crest cells. Plays a role in mediating RAF1-induced transcriptional repression of the TJ protein, occludin (OCLN) and subsequent oncogenic transformation of epithelial cells. Represses BRCA2 expression by binding to its E2-box-containing silencer and recruiting CTBP1 and HDAC1 in breast cells. In epidermal keratinocytes, binds to the E-box in ITGA3 promoter and represses its transcription. Involved in the regulation of ITGB1 and ITGB4 expression and cell adhesion and proliferation in epidermal keratinocytes. Binds to E-box2 domain of BSG and activates its expression during TGFB1-induced epithelial-mesenchymal transition (EMT) in hepatocytes. Represses E-Cadherin/CDH1 transcription via E-box elements. Involved in osteoblast maturation. Binds to RUNX2 and SOC9 promoters and may act as a positive and negative transcription regulator, respectively, in osteoblasts. Binds to CXCL12 promoter via E-box regions in mesenchymal stem cells and osteoblasts. Plays an essential role in TWIST1-induced EMT and its ability to promote invasion and metastasis. In Homo sapiens (Human), this protein is Zinc finger protein SNAI2 (SNAI2).